Consider the following 1466-residue polypeptide: ABC transporter G family member 10 (1466 aa).

Residues N23–I45 show a composition bias toward low complexity. The disordered stretch occupies residues N23–N47. One can recognise an ABC transporter 1 domain in the interval V138 to P392. The ABC transmembrane type-2 1 domain maps to W497 to Q724. The next 6 membrane-spanning stretches (helical) occupy residues F501–F521, A537–F557, I586–L606, G611–F631, L641–Y661, and I767–F787. An ABC transporter 2 domain is found at F838–V1082. G874–T881 is a binding site for ATP. One can recognise an ABC transmembrane type-2 2 domain in the interval S1177–T1399. The next 6 membrane-spanning stretches (helical) occupy residues Y1178 to W1198, I1214 to I1234, F1253 to F1273, F1290 to V1310, L1319 to V1339, and Y1440 to L1460.

The protein belongs to the ABC transporter superfamily. ABCG family. PDR (TC 3.A.1.205) subfamily.

Its subcellular location is the membrane. The protein is ABC transporter G family member 10 (abcG10) of Dictyostelium discoideum (Social amoeba).